Consider the following 138-residue polypeptide: Ribosome-binding factor A (138 aa).

The protein belongs to the RbfA family. In terms of assembly, monomer. Binds 30S ribosomal subunits, but not 50S ribosomal subunits or 70S ribosomes.

It localises to the cytoplasm. One of several proteins that assist in the late maturation steps of the functional core of the 30S ribosomal subunit. Associates with free 30S ribosomal subunits (but not with 30S subunits that are part of 70S ribosomes or polysomes). Required for efficient processing of 16S rRNA. May interact with the 5'-terminal helix region of 16S rRNA. The protein is Ribosome-binding factor A of Chromobacterium violaceum (strain ATCC 12472 / DSM 30191 / JCM 1249 / CCUG 213 / NBRC 12614 / NCIMB 9131 / NCTC 9757 / MK).